We begin with the raw amino-acid sequence, 266 residues long: Glucosamine-6-phosphate deaminase (266 aa).

Residue D72 is the Proton acceptor; for enolization step of the active site. D141 serves as the catalytic For ring-opening step. H143 acts as the Proton acceptor; for ring-opening step in catalysis. E148 serves as the catalytic For ring-opening step.

Belongs to the glucosamine/galactosamine-6-phosphate isomerase family. NagB subfamily. Homohexamer.

The catalysed reaction is alpha-D-glucosamine 6-phosphate + H2O = beta-D-fructose 6-phosphate + NH4(+). It functions in the pathway amino-sugar metabolism; N-acetylneuraminate degradation; D-fructose 6-phosphate from N-acetylneuraminate: step 5/5. With respect to regulation, allosterically activated by N-acetylglucosamine 6-phosphate (GlcNAc6P). Functionally, catalyzes the reversible isomerization-deamination of glucosamine 6-phosphate (GlcN6P) to form fructose 6-phosphate (Fru6P) and ammonium ion. This chain is Glucosamine-6-phosphate deaminase, found in Aeromonas hydrophila subsp. hydrophila (strain ATCC 7966 / DSM 30187 / BCRC 13018 / CCUG 14551 / JCM 1027 / KCTC 2358 / NCIMB 9240 / NCTC 8049).